The chain runs to 249 residues: Probable transcriptional regulatory protein ERGA_CDS_03720 (249 aa).

The interval 1-21 (MAGHSQFANIKHRKGAQDAKR) is disordered.

It belongs to the TACO1 family.

The protein resides in the cytoplasm. In Ehrlichia ruminantium (strain Gardel), this protein is Probable transcriptional regulatory protein ERGA_CDS_03720.